Consider the following 399-residue polypeptide: Succinate--CoA ligase [ADP-forming] subunit beta (399 aa).

One can recognise an ATP-grasp domain in the interval lysine 9–glutamate 254. ATP is bound by residues lysine 46, glycine 53–glycine 55, glutamate 109, alanine 112, and glutamate 117. 2 residues coordinate Mg(2+): asparagine 209 and aspartate 223. Residues asparagine 274 and glycine 331 to methionine 333 each bind substrate.

This sequence belongs to the succinate/malate CoA ligase beta subunit family. As to quaternary structure, heterotetramer of two alpha and two beta subunits. Mg(2+) is required as a cofactor.

The catalysed reaction is succinate + ATP + CoA = succinyl-CoA + ADP + phosphate. It carries out the reaction GTP + succinate + CoA = succinyl-CoA + GDP + phosphate. It participates in carbohydrate metabolism; tricarboxylic acid cycle; succinate from succinyl-CoA (ligase route): step 1/1. Succinyl-CoA synthetase functions in the citric acid cycle (TCA), coupling the hydrolysis of succinyl-CoA to the synthesis of either ATP or GTP and thus represents the only step of substrate-level phosphorylation in the TCA. The beta subunit provides nucleotide specificity of the enzyme and binds the substrate succinate, while the binding sites for coenzyme A and phosphate are found in the alpha subunit. The protein is Succinate--CoA ligase [ADP-forming] subunit beta of Phenylobacterium zucineum (strain HLK1).